The chain runs to 197 residues: Probable nicotinate-nucleotide adenylyltransferase (197 aa).

Belongs to the NadD family.

It catalyses the reaction nicotinate beta-D-ribonucleotide + ATP + H(+) = deamido-NAD(+) + diphosphate. It participates in cofactor biosynthesis; NAD(+) biosynthesis; deamido-NAD(+) from nicotinate D-ribonucleotide: step 1/1. Its function is as follows. Catalyzes the reversible adenylation of nicotinate mononucleotide (NaMN) to nicotinic acid adenine dinucleotide (NaAD). The chain is Probable nicotinate-nucleotide adenylyltransferase from Chlorobium phaeobacteroides (strain DSM 266 / SMG 266 / 2430).